The primary structure comprises 231 residues: Probable transglycosylase SceD (231 aa).

Residues 1–27 form the signal peptide; sequence MKKTLLASSLAVGLGIVAGNAGHEAHA. Over residues 103-116 the composition is skewed to polar residues; sequence APSAVQANQVQSQE. Positions 103–153 are disordered; that stretch reads APSAVQANQVQSQEVEAPQNAQTQQPQASTSNNSQVTATPTESKSSEGSSV. Low complexity predominate over residues 119 to 137; it reads APQNAQTQQPQASTSNNSQ. Residues 138–153 are compositionally biased toward polar residues; sequence VTATPTESKSSEGSSV.

This sequence belongs to the transglycosylase family. SceD subfamily.

It is found in the secreted. Is able to cleave peptidoglycan and affects clumping and separation of bacterial cells. The chain is Probable transglycosylase SceD (sceD) from Staphylococcus aureus (strain COL).